Reading from the N-terminus, the 123-residue chain is Secreted RxLR effector protein RXLR-C21 (123 aa).

The signal sequence occupies residues 1 to 23 (MRLHLLVLSVIVVSLLVSDNAHA). Positions 32–65 (RALRETPINGLVTNQLAVSRNLTPAKFITNSEER) match the RxLR-dEER motif. A helical transmembrane segment spans residues 101–121 (VTTICSIVLFVMVFGCLYKIF).

Belongs to the RxLR effector family.

It is found in the secreted. The protein resides in the host endoplasmic reticulum membrane. Its function is as follows. Secreted effector that does not suppress pattern-triggered immunity (PTI) in plant host. The chain is Secreted RxLR effector protein RXLR-C21 from Plasmopara halstedii (Downy mildew of sunflower).